Here is a 465-residue protein sequence, read N- to C-terminus: UDP-N-acetylmuramate--L-alanine ligase (465 aa).

112–118 (GTHGKTT) provides a ligand contact to ATP.

The protein belongs to the MurCDEF family.

The protein resides in the cytoplasm. It carries out the reaction UDP-N-acetyl-alpha-D-muramate + L-alanine + ATP = UDP-N-acetyl-alpha-D-muramoyl-L-alanine + ADP + phosphate + H(+). The protein operates within cell wall biogenesis; peptidoglycan biosynthesis. In terms of biological role, cell wall formation. The polypeptide is UDP-N-acetylmuramate--L-alanine ligase (Burkholderia vietnamiensis (strain G4 / LMG 22486) (Burkholderia cepacia (strain R1808))).